Here is a 295-residue protein sequence, read N- to C-terminus: Pyridoxal 5'-phosphate synthase subunit PdxS (295 aa).

Asp25 lines the D-ribose 5-phosphate pocket. The active-site Schiff-base intermediate with D-ribose 5-phosphate is the Lys82. D-ribose 5-phosphate is bound at residue Gly154. D-glyceraldehyde 3-phosphate is bound at residue Arg166. Residues Gly215 and 236–237 (GS) each bind D-ribose 5-phosphate.

It belongs to the PdxS/SNZ family. As to quaternary structure, in the presence of PdxT, forms a dodecamer of heterodimers.

It catalyses the reaction aldehydo-D-ribose 5-phosphate + D-glyceraldehyde 3-phosphate + L-glutamine = pyridoxal 5'-phosphate + L-glutamate + phosphate + 3 H2O + H(+). It functions in the pathway cofactor biosynthesis; pyridoxal 5'-phosphate biosynthesis. Catalyzes the formation of pyridoxal 5'-phosphate from ribose 5-phosphate (RBP), glyceraldehyde 3-phosphate (G3P) and ammonia. The ammonia is provided by the PdxT subunit. Can also use ribulose 5-phosphate and dihydroxyacetone phosphate as substrates, resulting from enzyme-catalyzed isomerization of RBP and G3P, respectively. This is Pyridoxal 5'-phosphate synthase subunit PdxS from Staphylococcus saprophyticus subsp. saprophyticus (strain ATCC 15305 / DSM 20229 / NCIMB 8711 / NCTC 7292 / S-41).